The chain runs to 817 residues: Leucine--tRNA ligase (817 aa).

Residues 42–52 carry the 'HIGH' region motif; that stretch reads PYPSGRLHMGH. The 'KMSKS' region motif lies at 576-580; sequence KMSKS. Position 579 (Lys579) interacts with ATP.

This sequence belongs to the class-I aminoacyl-tRNA synthetase family.

The protein resides in the cytoplasm. The catalysed reaction is tRNA(Leu) + L-leucine + ATP = L-leucyl-tRNA(Leu) + AMP + diphosphate. The sequence is that of Leucine--tRNA ligase from Halorhodospira halophila (strain DSM 244 / SL1) (Ectothiorhodospira halophila (strain DSM 244 / SL1)).